A 426-amino-acid chain; its full sequence is Phytoene synthase 3, chloroplastic (426 aa).

The transit peptide at 1–52 (MMSTSRAVKSPACAARRRQWSADAPNRTATFLACRHGRRLGGGGGAPCSVRA) directs the protein to the chloroplast.

The protein belongs to the phytoene/squalene synthase family. In terms of tissue distribution, expressed in roots and endosperm.

Its subcellular location is the plastid. The protein localises to the chloroplast. It localises to the plastoglobule. It catalyses the reaction 2 (2E,6E,10E)-geranylgeranyl diphosphate = 15-cis-phytoene + 2 diphosphate. Its function is as follows. Catalyzes the conversion of geranylgeranyl diphosphate to phytoene. Mediates the first committed step in carotenoid biosynthesis. May play a role in regulating carotenoid flux in response to abiotic stress in roots. May control flux to carotenoid precursors that are required for abiotic stress-induced abscisic acid (ABA) formation in roots. The polypeptide is Phytoene synthase 3, chloroplastic (Zea mays (Maize)).